The chain runs to 95 residues: Aspartyl/glutamyl-tRNA(Asn/Gln) amidotransferase subunit C (95 aa).

This sequence belongs to the GatC family. In terms of assembly, heterotrimer of A, B and C subunits.

The catalysed reaction is L-glutamyl-tRNA(Gln) + L-glutamine + ATP + H2O = L-glutaminyl-tRNA(Gln) + L-glutamate + ADP + phosphate + H(+). The enzyme catalyses L-aspartyl-tRNA(Asn) + L-glutamine + ATP + H2O = L-asparaginyl-tRNA(Asn) + L-glutamate + ADP + phosphate + 2 H(+). In terms of biological role, allows the formation of correctly charged Asn-tRNA(Asn) or Gln-tRNA(Gln) through the transamidation of misacylated Asp-tRNA(Asn) or Glu-tRNA(Gln) in organisms which lack either or both of asparaginyl-tRNA or glutaminyl-tRNA synthetases. The reaction takes place in the presence of glutamine and ATP through an activated phospho-Asp-tRNA(Asn) or phospho-Glu-tRNA(Gln). The sequence is that of Aspartyl/glutamyl-tRNA(Asn/Gln) amidotransferase subunit C from Acidithiobacillus ferrooxidans (strain ATCC 23270 / DSM 14882 / CIP 104768 / NCIMB 8455) (Ferrobacillus ferrooxidans (strain ATCC 23270)).